Reading from the N-terminus, the 259-residue chain is Deoxyribose-phosphate aldolase (259 aa).

Residue Asp-102 is the Proton donor/acceptor of the active site. The active-site Schiff-base intermediate with acetaldehyde is the Lys-167. Lys-201 functions as the Proton donor/acceptor in the catalytic mechanism.

The protein belongs to the DeoC/FbaB aldolase family. DeoC type 2 subfamily.

The protein localises to the cytoplasm. It carries out the reaction 2-deoxy-D-ribose 5-phosphate = D-glyceraldehyde 3-phosphate + acetaldehyde. The protein operates within carbohydrate degradation; 2-deoxy-D-ribose 1-phosphate degradation; D-glyceraldehyde 3-phosphate and acetaldehyde from 2-deoxy-alpha-D-ribose 1-phosphate: step 2/2. Functionally, catalyzes a reversible aldol reaction between acetaldehyde and D-glyceraldehyde 3-phosphate to generate 2-deoxy-D-ribose 5-phosphate. The sequence is that of Deoxyribose-phosphate aldolase from Klebsiella pneumoniae (strain 342).